A 196-amino-acid chain; its full sequence is MLDCRAIILLWLLPWATQGLAVPRSSSPDWAQCQQLSRNLCTLAWSAHTPVGQMDLLREEGEEETKSDVPRIQCGDGCDPQGLKDNSQFCLQRIRQGLVFYKHLLDSDIFTGEPSLLPDSPVDQLHTSLLGLSQLLQPEDHHWETQQMPRLSPSQQWQRSLLRSKILRSLQAFLAIAARVFAHGAATLTEPLVPTA.

The signal sequence occupies residues 1-21 (MLDCRAIILLWLLPWATQGLA).

Belongs to the IL-6 superfamily. As to quaternary structure, heterodimer with IL12B; disulfide-linked. The heterodimer is known as interleukin IL-23. Interacts with IL23R; this interaction enables recruitment of IL12RB1.

It is found in the secreted. Its function is as follows. Associates with IL12B to form the pro-inflammatory cytokine IL-23 that plays different roles in innate and adaptive immunity. Released by antigen-presenting cells such as dendritic cells or macrophages, binds to a heterodimeric receptor complex composed of IL12RB1 and IL23R to activate JAK2 and TYK2 which then phosphorylate the receptor to form a docking site leading to the phosphorylation of STAT3 and STAT4. This process leads to activation of several pathways including p38 MAPK or NF-kappa-B and promotes the production of pro-inflammatory cytokines such as interleukin-17A/IL17A. In turn, participates in the early and effective intracellular bacterial clearance. Promotes the expansion and survival of T-helper 17 cells, a CD4-positive helper T-cell subset that produces IL-17, as well as other IL-17-producing cells. The polypeptide is Interleukin-23 subunit alpha (Il23a) (Rattus norvegicus (Rat)).